The chain runs to 122 residues: Small ribosomal subunit protein uS13 (122 aa).

The tract at residues 99–122 (RGQRTHTNARTRKGPAKAIAGKKK) is disordered.

Belongs to the universal ribosomal protein uS13 family. In terms of assembly, part of the 30S ribosomal subunit. Forms a loose heterodimer with protein S19. Forms two bridges to the 50S subunit in the 70S ribosome.

In terms of biological role, located at the top of the head of the 30S subunit, it contacts several helices of the 16S rRNA. In the 70S ribosome it contacts the 23S rRNA (bridge B1a) and protein L5 of the 50S subunit (bridge B1b), connecting the 2 subunits; these bridges are implicated in subunit movement. Contacts the tRNAs in the A and P-sites. The chain is Small ribosomal subunit protein uS13 from Allorhizobium ampelinum (strain ATCC BAA-846 / DSM 112012 / S4) (Agrobacterium vitis (strain S4)).